The sequence spans 203 residues: uncharacterized protein (203 aa).

The PilZ domain maps to 90 to 188 (EKRQHVRVQP…YENIIGRYVM (99 aa)).

To A.aeolicus aq_820 and aq_1583.

This is an uncharacterized protein from Aquifex aeolicus (strain VF5).